The primary structure comprises 584 residues: 2-succinyl-5-enolpyruvyl-6-hydroxy-3-cyclohexene-1-carboxylate synthase (584 aa).

The disordered stretch occupies residues 563-584; sequence TDAEASHRERERLADRVTGLSV. Positions 566-577 are enriched in basic and acidic residues; that stretch reads EASHRERERLAD.

The protein belongs to the TPP enzyme family. MenD subfamily. As to quaternary structure, homodimer. The cofactor is Mg(2+). Mn(2+) is required as a cofactor. Thiamine diphosphate serves as cofactor.

The catalysed reaction is isochorismate + 2-oxoglutarate + H(+) = 5-enolpyruvoyl-6-hydroxy-2-succinyl-cyclohex-3-ene-1-carboxylate + CO2. Its pathway is quinol/quinone metabolism; 1,4-dihydroxy-2-naphthoate biosynthesis; 1,4-dihydroxy-2-naphthoate from chorismate: step 2/7. It functions in the pathway quinol/quinone metabolism; menaquinone biosynthesis. Catalyzes the thiamine diphosphate-dependent decarboxylation of 2-oxoglutarate and the subsequent addition of the resulting succinic semialdehyde-thiamine pyrophosphate anion to isochorismate to yield 2-succinyl-5-enolpyruvyl-6-hydroxy-3-cyclohexene-1-carboxylate (SEPHCHC). In Halobacterium salinarum (strain ATCC 29341 / DSM 671 / R1), this protein is 2-succinyl-5-enolpyruvyl-6-hydroxy-3-cyclohexene-1-carboxylate synthase.